We begin with the raw amino-acid sequence, 252 residues long: Cell division protein ZapD (252 aa).

It belongs to the ZapD family. In terms of assembly, interacts with FtsZ.

The protein localises to the cytoplasm. Functionally, cell division factor that enhances FtsZ-ring assembly. Directly interacts with FtsZ and promotes bundling of FtsZ protofilaments, with a reduction in FtsZ GTPase activity. This is Cell division protein ZapD from Chromobacterium violaceum (strain ATCC 12472 / DSM 30191 / JCM 1249 / CCUG 213 / NBRC 12614 / NCIMB 9131 / NCTC 9757 / MK).